The primary structure comprises 303 residues: Beta-carotene 3-hydroxylase 2, chloroplastic (303 aa).

Residues 1-52 constitute a chloroplast transit peptide; the sequence is MAAGLSTIAVTLKPLNRSSFSANHPISTAVFPPSLRFNGFRRRKILTVCFVV. 2 consecutive transmembrane segments (helical) span residues 96 to 116 and 130 to 150; these read YLIA…MAVY and VLEM…MEFW. The 128-residue stretch at 143-270 folds into the Fatty acid hydroxylase domain; it reads AAVGMEFWAR…KFKGVPYGLF (128 aa). Positions 155–160 match the Histidine box-1 motif; the sequence is HRALWH. Residues 165–171 carry the Histidine box-2 motif; that stretch reads NMHESHH. A run of 2 helical transmembrane segments spans residues 180-200 and 206-226; these read LNDV…YYGF and VPGL…AYMF. The Histidine box-3 motif lies at 228-233; the sequence is HDGLVH. The short motif at 254-258 is the Histidine box-4 element; sequence HQLHH.

Belongs to the sterol desaturase family. In terms of assembly, homodimer. In terms of tissue distribution, expressed in leaves, flowers, stems, roots and siliques.

It localises to the plastid. The protein localises to the chloroplast membrane. It catalyses the reaction all-trans-beta-carotene + 4 reduced [2Fe-2S]-[ferredoxin] + 2 O2 + 4 H(+) = all-trans-zeaxanthin + 4 oxidized [2Fe-2S]-[ferredoxin] + 2 H2O. Its function is as follows. Nonheme diiron monooxygenase involved in the biosynthesis of xanthophylls. Specific for beta-ring hydroxylations of beta-carotene. Also has a low activity toward the beta- and epsilon-rings of alpha-carotene. No activity with acyclic carotenoids such as lycopene and neurosporene. Uses ferredoxin as an electron donor. The chain is Beta-carotene 3-hydroxylase 2, chloroplastic (BETA-OHASE 2) from Arabidopsis thaliana (Mouse-ear cress).